The following is a 345-amino-acid chain: Biotin synthase (345 aa).

The Radical SAM core domain maps to 66–293 (NTVQLSTLLS…RAMVRLSAGR (228 aa)). Positions 81, 85, and 88 each coordinate [4Fe-4S] cluster. [2Fe-2S] cluster-binding residues include C125, C156, C216, and R288.

This sequence belongs to the radical SAM superfamily. Biotin synthase family. As to quaternary structure, homodimer. [4Fe-4S] cluster is required as a cofactor. It depends on [2Fe-2S] cluster as a cofactor.

The enzyme catalyses (4R,5S)-dethiobiotin + (sulfur carrier)-SH + 2 reduced [2Fe-2S]-[ferredoxin] + 2 S-adenosyl-L-methionine = (sulfur carrier)-H + biotin + 2 5'-deoxyadenosine + 2 L-methionine + 2 oxidized [2Fe-2S]-[ferredoxin]. It functions in the pathway cofactor biosynthesis; biotin biosynthesis; biotin from 7,8-diaminononanoate: step 2/2. Its function is as follows. Catalyzes the conversion of dethiobiotin (DTB) to biotin by the insertion of a sulfur atom into dethiobiotin via a radical-based mechanism. In Cupriavidus metallidurans (strain ATCC 43123 / DSM 2839 / NBRC 102507 / CH34) (Ralstonia metallidurans), this protein is Biotin synthase.